The sequence spans 151 residues: Deoxyuridine 5'-triphosphate nucleotidohydrolase (151 aa).

Substrate contacts are provided by residues arginine 70 to glycine 72, asparagine 83, leucine 87 to aspartate 89, and methionine 97.

It belongs to the dUTPase family. It depends on Mg(2+) as a cofactor.

It carries out the reaction dUTP + H2O = dUMP + diphosphate + H(+). It participates in pyrimidine metabolism; dUMP biosynthesis; dUMP from dCTP (dUTP route): step 2/2. In terms of biological role, this enzyme is involved in nucleotide metabolism: it produces dUMP, the immediate precursor of thymidine nucleotides and it decreases the intracellular concentration of dUTP so that uracil cannot be incorporated into DNA. The protein is Deoxyuridine 5'-triphosphate nucleotidohydrolase of Salmonella enteritidis PT4 (strain P125109).